Here is a 400-residue protein sequence, read N- to C-terminus: General L-amino acid transport system permease protein AapQ (400 aa).

The next 8 helical transmembrane spans lie at 29–49 (SIFY…WVAH), 100–120 (LLVA…IGIG), 142–162 (IPPL…LPQP), 188–208 (TGMI…IIIA), 225–245 (VWTA…VSGF), 264–284 (VVGP…ASFI), 340–360 (NSSL…GTIL), and 367–387 (IEIV…TSLF). The region spanning 96–388 (ILNTLLVAVT…SLSILTSLFM (293 aa)) is the ABC transmembrane type-1 domain.

This sequence belongs to the binding-protein-dependent transport system permease family. HisMQ subfamily.

It localises to the cell inner membrane. Part of a binding-protein-dependent transport system for L-amino acids, affects the uptake as well as efflux of these amino acids. Probably responsible for the translocation of the substrate across the membrane. The chain is General L-amino acid transport system permease protein AapQ (aapQ) from Rhizobium johnstonii (strain DSM 114642 / LMG 32736 / 3841) (Rhizobium leguminosarum bv. viciae).